We begin with the raw amino-acid sequence, 62 residues long: Protein DsrB (62 aa).

The protein belongs to the DsrB family.

This is Protein DsrB from Enterobacter sp. (strain 638).